The primary structure comprises 389 residues: GTPase Obg (389 aa).

Positions 1-159 constitute an Obg domain; that stretch reads MKFVDEAVIR…RSLKLELMLL (159 aa). The interval 122–144 is disordered; it reads FHGLGNTRFKSSTNRAPRQKTLG. One can recognise an OBG-type G domain in the interval 160-333; that stretch reads ADVGLLGMPN…LSLKLIDFIE (174 aa). Residues 166–173, 191–195, 213–216, 283–286, and 314–316 each bind GTP; these read GMPNAGKS, FTTLV, DIPG, NKTD, and SAY. Residues serine 173 and threonine 193 each coordinate Mg(2+).

Belongs to the TRAFAC class OBG-HflX-like GTPase superfamily. OBG GTPase family. Monomer. Mg(2+) serves as cofactor.

Its subcellular location is the cytoplasm. Functionally, an essential GTPase which binds GTP, GDP and possibly (p)ppGpp with moderate affinity, with high nucleotide exchange rates and a fairly low GTP hydrolysis rate. Plays a role in control of the cell cycle, stress response, ribosome biogenesis and in those bacteria that undergo differentiation, in morphogenesis control. The polypeptide is GTPase Obg (Shewanella woodyi (strain ATCC 51908 / MS32)).